Consider the following 404-residue polypeptide: G1/S-specific cyclin-E2 (404 aa).

The segment at 1 to 44 (MSRRSSRLQAKQQPQPSQTESPQEAQIIQAKKRKTTQDVKKRRE) is disordered. Over residues 12–26 (QQPQPSQTESPQEAQ) the composition is skewed to low complexity. Phosphoserine is present on Ser-21. Residues 35–44 (TTQDVKKRRE) show a composition bias toward basic and acidic residues. Lys-348 carries the N6-lactoyllysine modification. Residue Ser-383 is modified to Phosphoserine. The residue at position 392 (Thr-392) is a Phosphothreonine.

This sequence belongs to the cyclin family. Cyclin E subfamily. Interacts with the CDK2 (in vivo) and CDK3 (in vitro) protein kinases to form a serine/threonine kinase holoenzyme complex. The cyclin subunit imparts substrate specificity to the complex. Post-translationally, phosphorylation by CDK2 triggers its release from CDK2 and degradation via the ubiquitin proteasome pathway. Lactylated at Lys-348. Delactylated by SIRT3. In terms of tissue distribution, according to PubMed:9858585, highest levels of expression in adult testis, thymus and brain. Lower levels in placenta, spleen and colon. Consistently elevated levels in tumor-derived cells compared to non-transformed proliferating cells. According to PubMed:9840927: low levels in thymus, prostate, brain, skeletal muscle, and kidney. Elevated levels in lung. According to PubMed:9840943 highly expressed in testis, placenta, thymus and brain. In a lesser extent in small intestine and colon.

It is found in the nucleus. Essential for the control of the cell cycle at the late G1 and early S phase. The protein is G1/S-specific cyclin-E2 (CCNE2) of Homo sapiens (Human).